A 395-amino-acid polypeptide reads, in one-letter code: Zinc finger protein 200 (395 aa).

Residues 157–208 are disordered; sequence VNGSNPEGEDPEREPVENEDYREKSSDDDEMDSSLVSQQPPDNQEKERLNTS. Basic and acidic residues predominate over residues 169–181; it reads REPVENEDYREKS. The segment at 246-395 is interaction with PRMT3; sequence RRTRRWYTCP…HSACKTRKQK (150 aa). 5 consecutive C2H2-type zinc fingers follow at residues 252–274, 280–302, 308–330, 336–358, and 364–386; these read YTCPLCGKQFNESSYLISHQRTH, YDCNHCGKSFNHKTNLNKHERIH, YSCSQCGKNFRQNSHRSRHEGIH, FKCPECGKTFPKNEEFVLHLQSH, and YGCKKCGRRFGRLSNCTRHEKTH.

In terms of assembly, interacts (via C-terminus) with PRMT3 (via zinc-finger); the interaction is direct and required to localize protein arginine N-methyltransferase PRMT3 to the nucleus and inhibit its proteasomal degradation. In terms of tissue distribution, highly expressed in testis, weakly expressed in spleen, thymus, prostate, ovary, small intestine colon and peripheral blood leukocytes.

Its subcellular location is the nucleus. Its function is as follows. Localizes protein arginine N-methyltransferase PRMT3 to the nucleus. This chain is Zinc finger protein 200 (ZNF200), found in Homo sapiens (Human).